Reading from the N-terminus, the 216-residue chain is Protein ORM2 (216 aa).

The interval Met1 to Ile50 is disordered. Residues Met1–Arg78 are Cytoplasmic-facing. Phosphoserine is present on residues Ser9 and Ser15. Over residues Leu17–Val38 the composition is skewed to polar residues. Position 18 is a phosphothreonine (Thr18). A phosphoserine mark is found at Ser22, Ser29, and Ser51. The chain crosses the membrane as a helical span at residues Gly79 to Gly99. Over Ser100–Lys103 the chain is Extracellular. The helical transmembrane segment at Trp104 to Val124 threads the bilayer. Over Lys125–Glu148 the chain is Cytoplasmic. Residues Thr149–Ser169 traverse the membrane as a helical segment. Residues Asn170–Met177 lie on the Extracellular side of the membrane. A helical transmembrane segment spans residues Thr178–Ile198. Over Thr199–Ser216 the chain is Cytoplasmic.

It belongs to the ORM family. Component of the SPOTS complex, at least composed of LCB1/2 (LCB1 and/or LCB2), ORM1/2 (ORM1 and/or ORM2), SAC1 and TSC3. Post-translationally, phosphorylated in case of disruption of sphingolipid synthesis. Phosphorylation regulates the inhibitory activity of serine palmitoyltransferases (LCB1 and LCB2).

Its subcellular location is the endoplasmic reticulum membrane. Functionally, component of the SPOTS complex that acts as a negative regulator of sphingolipid synthesis. Acts by inhibiting serine palmitoyltransferases (LCB1 and LCB2) activity. Along with ORM1, plays a role in the phosphorylation of LAC1 and YPK1, the distribution of actin patches between mother and daughter cells, and in endocytosis. The chain is Protein ORM2 (ORM2) from Saccharomyces cerevisiae (strain ATCC 204508 / S288c) (Baker's yeast).